Reading from the N-terminus, the 124-residue chain is Cytoinsectotoxin-4 (124 aa).

The first 19 residues, 1–19 (MKCFILAAALVLAFACIAA), serve as a signal peptide directing secretion. The propeptide occupies 20-62 (SEPAETENEDLDDLSDLEDEEWLDELEEAAEYLESLREFEESR). Position 123 is a phenylalanine amide (Phe-123).

Belongs to the cationic peptide 06 (cytoinsectotoxin) family. As to expression, expressed by the venom gland.

Its subcellular location is the secreted. Functionally, insecticidal and antimicrobial peptide. Has insecticidal activity against larvae of flesh fly S.carnaria. Has antibacterial activity against Gram-positive bacterium B.subtilis B-501 (MIC=2.5 uM) and Gram-negative bacterium E.coli DH5alpha (MIC=10 uM). This Lachesana tarabaevi (Spider) protein is Cytoinsectotoxin-4.